Here is a 149-residue protein sequence, read N- to C-terminus: Large ribosomal subunit protein uL30 (149 aa).

The protein belongs to the universal ribosomal protein uL30 family. As to quaternary structure, part of the 50S ribosomal subunit.

The protein is Large ribosomal subunit protein uL30 of Methanopyrus kandleri (strain AV19 / DSM 6324 / JCM 9639 / NBRC 100938).